The chain runs to 270 residues: tRNA pseudouridine synthase A (270 aa).

Asp51 (nucleophile) is an active-site residue. Tyr109 is a binding site for substrate.

This sequence belongs to the tRNA pseudouridine synthase TruA family. As to quaternary structure, homodimer.

It carries out the reaction uridine(38/39/40) in tRNA = pseudouridine(38/39/40) in tRNA. In terms of biological role, formation of pseudouridine at positions 38, 39 and 40 in the anticodon stem and loop of transfer RNAs. In Burkholderia thailandensis (strain ATCC 700388 / DSM 13276 / CCUG 48851 / CIP 106301 / E264), this protein is tRNA pseudouridine synthase A.